The chain runs to 156 residues: Large ribosomal subunit protein eL24 (156 aa).

A disordered region spans residues 87 to 156 (LELIKERRSQ…AFQKVHATSR (70 aa)). Residues 89–129 (LIKERRSQKPSDRKAARDVKLAKDKEAKKADKAARKAEKAK) are compositionally biased toward basic and acidic residues. Residues 130–147 (SAAAGAQSKVSKQQSKGA) show a composition bias toward low complexity.

The protein belongs to the eukaryotic ribosomal protein eL24 family.

In Debaryomyces hansenii (strain ATCC 36239 / CBS 767 / BCRC 21394 / JCM 1990 / NBRC 0083 / IGC 2968) (Yeast), this protein is Large ribosomal subunit protein eL24 (RPL24).